The following is a 615-amino-acid chain: NEDD8 ultimate buster 1 (615 aa).

Coiled coils occupy residues 36–70 and 152–203; these read LALK…AIER and KAMV…AAET. UBA domains follow at residues 374–413, 424–470, and 489–529; these read YIDP…HITN, EEKE…LLSN, and SPSQ…LAHN. The Nuclear localization signal motif lies at 414 to 431; it reads RREELAQIRKEEKEKKRR. The NEDD8-binding 1 stretch occupies residues 427–474; that stretch reads EKKRRRLENIRFLKGMGYSTHAAQQVLHAASGNLDEALKILLSNPQMW. Residues 532–586 are disordered; the sequence is SLPPELPLSPEDSLSPPATSPSDSAGTSSASTDEDMETEAVNEILEDIPEHEEDY. The segment covering 539–562 has biased composition (low complexity); sequence LSPEDSLSPPATSPSDSAGTSSAS. The tract at residues 550–598 is NEDD8-binding 2; it reads TSPSDSAGTSSASTDEDMETEAVNEILEDIPEHEEDYLDSTLEDEEIII. Over residues 563-586 the composition is skewed to acidic residues; the sequence is TDEDMETEAVNEILEDIPEHEEDY.

Directly interacts with NEDD8 and PSMD4/S5a, a member of the regulatory subunit of the 26S proteasome. Isoform 1 binds to NEDD8 more efficiently than isoform 2. Interacts with AIPL1. The interaction with UBD via UBA domains facilitates the linking of UBD-conjugated target protein to the proteasome complex and accelerates UBD degradation and that of its conjugates. In terms of tissue distribution, widely expressed with lowest expression in the pancreas for isoform 1 and in leukocytes, liver, prostate and skeletal muscle for isoform 2.

The protein resides in the nucleus. Its function is as follows. Specific down-regulator of the NEDD8 conjugation system. Recruits NEDD8, UBD, and their conjugates to the proteasome for degradation. Isoform 1 promotes the degradation of NEDD8 more efficiently than isoform 2. The sequence is that of NEDD8 ultimate buster 1 (NUB1) from Homo sapiens (Human).